Here is a 209-residue protein sequence, read N- to C-terminus: Large ribosomal subunit protein bL21m (209 aa).

Residues 1-43 (MAAAIAASALPGAFGRLVSVCSRSILASQGSGSASLWSASRRF) constitute a mitochondrion transit peptide.

This sequence belongs to the bacterial ribosomal protein bL21 family. In terms of assembly, component of the mitochondrial ribosome large subunit (39S) which comprises a 16S rRNA and about 50 distinct proteins.

It localises to the mitochondrion. In Mus musculus (Mouse), this protein is Large ribosomal subunit protein bL21m (Mrpl21).